A 780-amino-acid polypeptide reads, in one-letter code: Zinc finger protein GLIS3 (780 aa).

2 stretches are compositionally biased toward polar residues: residues 80–92 (PSLS…QNGT) and 106–115 (VSGNSVSNSL). Disordered stretches follow at residues 80-148 (PSLS…KKRA) and 290-315 (PSAL…HLHH). A compositionally biased stretch (basic residues) spans 135–148 (SATRAHSTRSKKRA). The span at 293-308 (LPLPLPPPQGPPPPYH) shows a compositional bias: pro residues. Residues 345 to 370 (HCCRWIDCSALYDQQEELVRHIEKVH) form a C2H2-type 1 zinc finger. The C2H2-type 2; atypical zinc finger occupies 379 to 406 (FTCFWTGCPRRYKPFNARYKLLIHMRVH). C2H2-type zinc fingers lie at residues 412–436 (NKCT…LRSH), 442–466 (YLCQ…QRTH), and 472–496 (YACQ…VKAH). Disordered stretches follow at residues 485-512 (DPSS…SSTE) and 527-670 (LQPA…QPNG). Residues 490–506 (RKHVKAHSSREQQARKK) carry the Bipartite nuclear localization signal motif. Over residues 497-512 (SSREQQARKKLRSSTE) the composition is skewed to basic and acidic residues. Positions 567–577 (HSTRSGTAAGA) are enriched in low complexity. Positions 593–605 (VQGSPHNPSSQLP) are enriched in polar residues.

It belongs to the GLI C2H2-type zinc-finger protein family. As to expression, in the embryo, expressed at high levels in the kidney and testis. In the adult, expressed at high levels in the kidney and uterus and at lower levels in the brain, lung, skeletal muscle and pancreas.

The protein resides in the nucleus. Its function is as follows. Acts both as a repressor and activator of transcription. Binds to the consensus sequence 5'-GACCACCCAC-3'. The protein is Zinc finger protein GLIS3 of Mus musculus (Mouse).